Here is a 360-residue protein sequence, read N- to C-terminus: Phospho-N-acetylmuramoyl-pentapeptide-transferase (360 aa).

10 helical membrane-spanning segments follow: residues 21-41 (YITV…LWIG), 73-93 (TMGG…WANL), 94-114 (ANPY…IGFV), 132-152 (WKYF…YAIG), 168-188 (IMPQ…VGTS), 199-219 (GLAI…AWAT), 235-255 (FSAE…GFLW), 263-283 (VFMG…VAVL), 288-308 (FLLV…ILQV), and 338-358 (VIVR…VTLK).

The protein belongs to the glycosyltransferase 4 family. MraY subfamily. It depends on Mg(2+) as a cofactor.

It localises to the cell inner membrane. The catalysed reaction is UDP-N-acetyl-alpha-D-muramoyl-L-alanyl-gamma-D-glutamyl-meso-2,6-diaminopimeloyl-D-alanyl-D-alanine + di-trans,octa-cis-undecaprenyl phosphate = di-trans,octa-cis-undecaprenyl diphospho-N-acetyl-alpha-D-muramoyl-L-alanyl-D-glutamyl-meso-2,6-diaminopimeloyl-D-alanyl-D-alanine + UMP. It participates in cell wall biogenesis; peptidoglycan biosynthesis. Catalyzes the initial step of the lipid cycle reactions in the biosynthesis of the cell wall peptidoglycan: transfers peptidoglycan precursor phospho-MurNAc-pentapeptide from UDP-MurNAc-pentapeptide onto the lipid carrier undecaprenyl phosphate, yielding undecaprenyl-pyrophosphoryl-MurNAc-pentapeptide, known as lipid I. The chain is Phospho-N-acetylmuramoyl-pentapeptide-transferase from Pasteurella multocida (strain Pm70).